Here is a 640-residue protein sequence, read N- to C-terminus: Threonine--tRNA ligase (640 aa).

The region spanning 1-61 (MPIITLPDGS…TNDAEIQIIT (61 aa)) is the TGS domain. The segment at 242–533 (DHRKLGKKLS…LIENYSGNLP (292 aa)) is catalytic. C333, H384, and H510 together coordinate Zn(2+).

This sequence belongs to the class-II aminoacyl-tRNA synthetase family. Homodimer. The cofactor is Zn(2+).

Its subcellular location is the cytoplasm. The catalysed reaction is tRNA(Thr) + L-threonine + ATP = L-threonyl-tRNA(Thr) + AMP + diphosphate + H(+). Its function is as follows. Catalyzes the attachment of threonine to tRNA(Thr) in a two-step reaction: L-threonine is first activated by ATP to form Thr-AMP and then transferred to the acceptor end of tRNA(Thr). Also edits incorrectly charged L-seryl-tRNA(Thr). The sequence is that of Threonine--tRNA ligase from Prochlorococcus marinus (strain NATL1A).